Reading from the N-terminus, the 295-residue chain is Mycothiol acetyltransferase (295 aa).

N-acetyltransferase domains lie at 5 to 141 (VEIR…TPLP) and 149 to 295 (VRLR…MYRR). Position 35 (E35) interacts with 1D-myo-inositol 2-(L-cysteinylamino)-2-deoxy-alpha-D-glucopyranoside. 76 to 78 (LVV) is a binding site for acetyl-CoA. Positions 176, 215, and 229 each coordinate 1D-myo-inositol 2-(L-cysteinylamino)-2-deoxy-alpha-D-glucopyranoside. Acetyl-CoA is bound by residues 233-235 (VGV) and 240-246 (RGTGLGR). Y267 provides a ligand contact to 1D-myo-inositol 2-(L-cysteinylamino)-2-deoxy-alpha-D-glucopyranoside. Residue 272-277 (NTAAVR) participates in acetyl-CoA binding.

It belongs to the acetyltransferase family. MshD subfamily. As to quaternary structure, monomer.

It catalyses the reaction 1D-myo-inositol 2-(L-cysteinylamino)-2-deoxy-alpha-D-glucopyranoside + acetyl-CoA = mycothiol + CoA + H(+). Functionally, catalyzes the transfer of acetyl from acetyl-CoA to desacetylmycothiol (Cys-GlcN-Ins) to form mycothiol. This Thermobispora bispora (strain ATCC 19993 / DSM 43833 / CBS 139.67 / JCM 10125 / KCTC 9307 / NBRC 14880 / R51) protein is Mycothiol acetyltransferase.